Consider the following 343-residue polypeptide: Major outer membrane protein (343 aa).

Residues 1 to 20 form the signal peptide; the sequence is MKKTIVALAVAAVAATSANA.

As to quaternary structure, disulfide bond interactions within and between MOMP molecules and other components form high molecular-weight oligomers.

Its subcellular location is the cell outer membrane. Its function is as follows. Structural rigidity of the outer membrane of elementary bodies and porin forming, permitting diffusion of solutes through the intracellular reticulate body membrane. The chain is Major outer membrane protein (ompH) from Pasteurella multocida.